Consider the following 193-residue polypeptide: MEARFLKSASDLESCPQDSVKEVCFMGRSNVGKSSLINAFFQKKLAKTSATPGRTQLLNFFEYNRKRFVDLPGYGFAKLSKVQKEAITNLLTQFLNFRQNLTGVVLVIDSGVVTVQDQEVVKTILQTGLNFLVIANKFDKLNQSERFHTQNKLAHFLKVNPNKCLFVSAKTGYNLQVMHKQIFELFKADGQAI.

The region spanning 19–188 is the EngB-type G domain; it reads SVKEVCFMGR…HKQIFELFKA (170 aa). GTP contacts are provided by residues 27–34, 53–57, 70–73, 136–139, and 167–169; these read GRSNVGKS, GRTQL, DLPG, NKFD, and VSA. Residues Ser34 and Thr55 each coordinate Mg(2+).

Belongs to the TRAFAC class TrmE-Era-EngA-EngB-Septin-like GTPase superfamily. EngB GTPase family. Mg(2+) serves as cofactor.

In terms of biological role, necessary for normal cell division and for the maintenance of normal septation. In Mycoplasma pneumoniae (strain ATCC 29342 / M129 / Subtype 1) (Mycoplasmoides pneumoniae), this protein is Probable GTP-binding protein EngB.